We begin with the raw amino-acid sequence, 166 residues long: Dihydrofolate reductase (166 aa).

The DHFR domain occupies 6–164 (KISLIVAMDK…YDYYFHIYER (159 aa)). 10–12 (IVA) is a binding site for substrate. NADP(+)-binding positions include 11-12 (VA) and 19-24 (IGKDND). Asp-32 is a substrate binding site. Residue 48-51 (GRKN) participates in NADP(+) binding. Arg-62 is a binding site for substrate. NADP(+) is bound by residues 67 to 70 (LTRD) and 100 to 105 (FGGEQI). Position 119 (Thr-119) interacts with substrate.

The protein belongs to the dihydrofolate reductase family.

The catalysed reaction is (6S)-5,6,7,8-tetrahydrofolate + NADP(+) = 7,8-dihydrofolate + NADPH + H(+). It functions in the pathway cofactor biosynthesis; tetrahydrofolate biosynthesis; 5,6,7,8-tetrahydrofolate from 7,8-dihydrofolate: step 1/1. Functionally, key enzyme in folate metabolism. Catalyzes an essential reaction for de novo glycine and purine synthesis, and for DNA precursor synthesis. In Staphylococcus haemolyticus, this protein is Dihydrofolate reductase (dfrD).